The sequence spans 771 residues: 5-methyltetrahydropteroyltriglutamate--homocysteine methyltransferase (771 aa).

5-methyltetrahydropteroyltri-L-glutamate-binding positions include 13–16 and Lys128; that span reads RELK. Residues 451 to 453 and Glu504 contribute to the L-homocysteine site; that span reads IGS. L-methionine is bound by residues 451–453 and Glu504; that span reads IGS. 5-methyltetrahydropteroyltri-L-glutamate contacts are provided by residues 535–536 and Trp581; that span reads RC. Asp619 contacts L-homocysteine. Residue Asp619 participates in L-methionine binding. Glu625 serves as a coordination point for 5-methyltetrahydropteroyltri-L-glutamate. Residues His661, Cys663, and Glu685 each contribute to the Zn(2+) site. His714 serves as the catalytic Proton donor. A Zn(2+)-binding site is contributed by Cys746.

Belongs to the vitamin-B12 independent methionine synthase family. The cofactor is Zn(2+).

It catalyses the reaction 5-methyltetrahydropteroyltri-L-glutamate + L-homocysteine = tetrahydropteroyltri-L-glutamate + L-methionine. The protein operates within amino-acid biosynthesis; L-methionine biosynthesis via de novo pathway; L-methionine from L-homocysteine (MetE route): step 1/1. Catalyzes the transfer of a methyl group from 5-methyltetrahydrofolate to homocysteine resulting in methionine formation. This is 5-methyltetrahydropteroyltriglutamate--homocysteine methyltransferase from Nitrobacter winogradskyi (strain ATCC 25391 / DSM 10237 / CIP 104748 / NCIMB 11846 / Nb-255).